The following is a 284-amino-acid chain: Pantothenate synthetase (284 aa).

Methionine 30–histidine 37 is an ATP binding site. Histidine 37 serves as the catalytic Proton donor. A (R)-pantoate-binding site is contributed by glutamine 61. Residue glutamine 61 coordinates beta-alanine. Position 149-152 (glycine 149–aspartate 152) interacts with ATP. Glutamine 155 lines the (R)-pantoate pocket. ATP contacts are provided by residues valine 178 and leucine 186–arginine 189.

Belongs to the pantothenate synthetase family. In terms of assembly, homodimer.

Its subcellular location is the cytoplasm. It catalyses the reaction (R)-pantoate + beta-alanine + ATP = (R)-pantothenate + AMP + diphosphate + H(+). It participates in cofactor biosynthesis; (R)-pantothenate biosynthesis; (R)-pantothenate from (R)-pantoate and beta-alanine: step 1/1. In terms of biological role, catalyzes the condensation of pantoate with beta-alanine in an ATP-dependent reaction via a pantoyl-adenylate intermediate. This Yersinia enterocolitica serotype O:8 / biotype 1B (strain NCTC 13174 / 8081) protein is Pantothenate synthetase.